Consider the following 351-residue polypeptide: Nicotinate-nucleotide--dimethylbenzimidazole phosphoribosyltransferase (351 aa).

Glu-317 acts as the Proton acceptor in catalysis.

Belongs to the CobT family.

It catalyses the reaction 5,6-dimethylbenzimidazole + nicotinate beta-D-ribonucleotide = alpha-ribazole 5'-phosphate + nicotinate + H(+). Its pathway is nucleoside biosynthesis; alpha-ribazole biosynthesis; alpha-ribazole from 5,6-dimethylbenzimidazole: step 1/2. In terms of biological role, catalyzes the synthesis of alpha-ribazole-5'-phosphate from nicotinate mononucleotide (NAMN) and 5,6-dimethylbenzimidazole (DMB). This Bradyrhizobium sp. (strain BTAi1 / ATCC BAA-1182) protein is Nicotinate-nucleotide--dimethylbenzimidazole phosphoribosyltransferase.